The following is a 427-amino-acid chain: Glucose-6-phosphate isomerase (427 aa).

Residue E277 is the Proton donor of the active site. Active-site residues include H298 and K414.

The protein belongs to the GPI family.

The protein resides in the cytoplasm. It catalyses the reaction alpha-D-glucose 6-phosphate = beta-D-fructose 6-phosphate. Its pathway is carbohydrate biosynthesis; gluconeogenesis. The protein operates within carbohydrate degradation; glycolysis; D-glyceraldehyde 3-phosphate and glycerone phosphate from D-glucose: step 2/4. Its function is as follows. Catalyzes the reversible isomerization of glucose-6-phosphate to fructose-6-phosphate. This is Glucose-6-phosphate isomerase from Mycoplasma mycoides subsp. mycoides SC (strain CCUG 32753 / NCTC 10114 / PG1).